A 102-amino-acid polypeptide reads, in one-letter code: ATP-dependent Clp protease adapter protein ClpS (102 aa).

Residues 1-18 show a composition bias toward basic and acidic residues; sequence MSQFDHQHLSDTEEKQEL. The segment at 1–21 is disordered; sequence MSQFDHQHLSDTEEKQELKPP.

The protein belongs to the ClpS family. As to quaternary structure, binds to the N-terminal domain of the chaperone ClpA.

In terms of biological role, involved in the modulation of the specificity of the ClpAP-mediated ATP-dependent protein degradation. The chain is ATP-dependent Clp protease adapter protein ClpS from Idiomarina loihiensis (strain ATCC BAA-735 / DSM 15497 / L2-TR).